Here is a 64-residue protein sequence, read N- to C-terminus: Temporin-ALg (64 aa).

Residues Met1–Cys22 form the signal peptide. A propeptide spanning residues Glu23–Arg46 is cleaved from the precursor. Leu62 carries the post-translational modification Leucine amide.

It belongs to the frog skin active peptide (FSAP) family. Temporin subfamily. In terms of tissue distribution, expressed by the skin glands.

The protein localises to the secreted. In terms of biological role, antimicrobial peptide with activity against Gram-positive and Gram-negative bacteria and against fungi. Has been tested against S.aureus (MIC=2.5 ug/mL), B.pumilus (MIC=2.5 ug/mL), B.cereus (MIC=30.0 ug/mL), E.coli (MIC=5.0 ug/mL), B.dysenteriae (MIC=10.0 ug/mL), A.cacoaceticus (MIC=30.0 ug/mL), P.aeruginosa (MIC=7.5 ug/mL) and C.albicans (MIC=1.25 ug/mL). Also shows a weak hemolytic activity. This is Temporin-ALg from Amolops loloensis (Lolokou Sucker Frog).